A 246-amino-acid chain; its full sequence is Adenylate kinase 4 (246 aa).

Ala2 bears the N-acetylalanine mark. 43–48 (GSGKGT) lines the ATP pocket. The NMP stretch occupies residues 63–92 (STGDMLRAAVASKTPLGVKAKEAMEKGELV). AMP is bound by residues Thr64, Arg69, 90 to 92 (ELV), 118 to 121 (GFPR), and Gln125. Residues 159–196 (GRWIHPSSGRSYHTKFAPPKTPGVDDITGEPLIQRKDD) are LID. Arg160 is an ATP binding site. Residues Arg193 and Arg204 each coordinate AMP.

The protein belongs to the adenylate kinase family. Monomer.

The protein localises to the cytoplasm. It carries out the reaction AMP + ATP = 2 ADP. In terms of biological role, catalyzes the reversible transfer of the terminal phosphate group between ATP and AMP. Plays an important role in cellular energy homeostasis and in adenine nucleotide metabolism. This chain is Adenylate kinase 4 (ADK1), found in Arabidopsis thaliana (Mouse-ear cress).